Reading from the N-terminus, the 124-residue chain is Small ribosomal subunit protein uS12 (124 aa).

Residues 1–32 (MPTINQLVRKGRRDKTAKVKTAALKGSPQRRG) form a disordered region. Asp-89 bears the 3-methylthioaspartic acid mark. The segment at 104–124 (TQGVKGRKQARSRYGAKKEKS) is disordered. Basic residues predominate over residues 108–118 (KGRKQARSRYG).

It belongs to the universal ribosomal protein uS12 family. As to quaternary structure, part of the 30S ribosomal subunit. Contacts proteins S8 and S17. May interact with IF1 in the 30S initiation complex.

Its function is as follows. With S4 and S5 plays an important role in translational accuracy. Functionally, interacts with and stabilizes bases of the 16S rRNA that are involved in tRNA selection in the A site and with the mRNA backbone. Located at the interface of the 30S and 50S subunits, it traverses the body of the 30S subunit contacting proteins on the other side and probably holding the rRNA structure together. The combined cluster of proteins S8, S12 and S17 appears to hold together the shoulder and platform of the 30S subunit. This Rhodococcus erythropolis (strain PR4 / NBRC 100887) protein is Small ribosomal subunit protein uS12.